Reading from the N-terminus, the 200-residue chain is Casparian strip membrane protein 2 (200 aa).

The Cytoplasmic segment spans residues Met-1–Lys-37. A helical membrane pass occupies residues Gly-38–Ala-58. The Extracellular segment spans residues Ser-59 to Gln-88. Residues Phe-89–Ile-109 traverse the membrane as a helical segment. The Cytoplasmic segment spans residues Val-110–Arg-121. A helical transmembrane segment spans residues Ile-122–Ala-142. The Extracellular portion of the chain corresponds to Ala-143–Ser-175. Asn-153 is a glycosylation site (N-linked (GlcNAc...) asparagine). A helical membrane pass occupies residues Val-176 to Ala-196. The Cytoplasmic portion of the chain corresponds to Leu-197 to Tyr-200.

It belongs to the Casparian strip membrane proteins (CASP) family. In terms of assembly, homodimer and heterodimers.

Its subcellular location is the cell membrane. In terms of biological role, regulates membrane-cell wall junctions and localized cell wall deposition. Required for establishment of the Casparian strip membrane domain (CSD) and the subsequent formation of Casparian strips, a cell wall modification of the root endodermis that determines an apoplastic barrier between the intraorganismal apoplasm and the extraorganismal apoplasm and prevents lateral diffusion. The sequence is that of Casparian strip membrane protein 2 from Ricinus communis (Castor bean).